We begin with the raw amino-acid sequence, 503 residues long: Maturase K (503 aa).

Belongs to the intron maturase 2 family. MatK subfamily.

The protein resides in the plastid. Its subcellular location is the chloroplast. Functionally, usually encoded in the trnK tRNA gene intron. Probably assists in splicing its own and other chloroplast group II introns. The protein is Maturase K of Rosa carolina (Pasture rose).